Consider the following 337-residue polypeptide: Anthranilate phosphoribosyltransferase (337 aa).

5-phospho-alpha-D-ribose 1-diphosphate contacts are provided by residues glycine 79, 82 to 83, threonine 87, 89 to 92, 107 to 115, and serine 119; these read GD, NVST, and KHGNRSVSS. Glycine 79 contacts anthranilate. Serine 91 is a binding site for Mg(2+). Asparagine 110 is an anthranilate binding site. Anthranilate is bound at residue arginine 165. Residues aspartate 223 and glutamate 224 each contribute to the Mg(2+) site.

The protein belongs to the anthranilate phosphoribosyltransferase family. In terms of assembly, homodimer. The cofactor is Mg(2+).

It catalyses the reaction N-(5-phospho-beta-D-ribosyl)anthranilate + diphosphate = 5-phospho-alpha-D-ribose 1-diphosphate + anthranilate. The protein operates within amino-acid biosynthesis; L-tryptophan biosynthesis; L-tryptophan from chorismate: step 2/5. In terms of biological role, catalyzes the transfer of the phosphoribosyl group of 5-phosphorylribose-1-pyrophosphate (PRPP) to anthranilate to yield N-(5'-phosphoribosyl)-anthranilate (PRA). The chain is Anthranilate phosphoribosyltransferase from Aeromonas salmonicida (strain A449).